A 412-amino-acid polypeptide reads, in one-letter code: Poly-beta-1,6-N-acetyl-D-glucosamine synthase (412 aa).

4 consecutive transmembrane segments (helical) span residues 6–28 (FLLF…FYFT), 290–312 (LYIL…LYLG), 332–354 (IFLL…ALFI), and 366–388 (LIFV…LVAF).

The protein belongs to the glycosyltransferase 2 family.

The protein resides in the cell membrane. N-acetylglucosaminyltransferase that catalyzes the polymerization of single monomer units of UDP-N-acetylglucosamine to produce the linear homomer poly-beta-1,6-N-acetyl-D-glucosamine (PNAG, also referred to as PIA), a biofilm adhesin polysaccharide. Requires IcaD for full activity. The protein is Poly-beta-1,6-N-acetyl-D-glucosamine synthase (icaA) of Staphylococcus aureus (strain MSSA476).